The primary structure comprises 539 residues: 2,3-bisphosphoglycerate-independent phosphoglycerate mutase (539 aa).

Residues aspartate 37 and serine 86 each coordinate Mn(2+). The active site involves serine 86. Substrate contacts are provided by residues histidine 147, 177–178 (RD), arginine 210, arginine 216, 284–287 (RADR), and lysine 359. Mn(2+)-binding residues include aspartate 426, histidine 430, aspartate 467, histidine 468, and histidine 485.

The protein belongs to the BPG-independent phosphoglycerate mutase family. Mg(2+) serves as cofactor. It depends on Mn(2+) as a cofactor. In terms of tissue distribution, expressed ubiquitously. High expression levels in the nerve ring region, intestine and body wall muscles.

It catalyses the reaction (2R)-2-phosphoglycerate = (2R)-3-phosphoglycerate. It participates in carbohydrate degradation; glycolysis; pyruvate from D-glyceraldehyde 3-phosphate: step 3/5. Its activity is regulated as follows. Activity is not affected by 2,3-bisphosphoglycerate. Catalyzes the interconversion of 2-phosphoglycerate and 3-phosphoglycerate. This is 2,3-bisphosphoglycerate-independent phosphoglycerate mutase from Caenorhabditis elegans.